The sequence spans 111 residues: UPF0145 protein BMA10229_A0446 (111 aa).

The protein belongs to the UPF0145 family.

The sequence is that of UPF0145 protein BMA10229_A0446 from Burkholderia mallei (strain NCTC 10229).